A 343-amino-acid polypeptide reads, in one-letter code: uncharacterized protein (343 aa).

The protein belongs to the histone deacetylase family.

Functionally, putative deacetylase. This is an uncharacterized protein from Methanocaldococcus jannaschii (strain ATCC 43067 / DSM 2661 / JAL-1 / JCM 10045 / NBRC 100440) (Methanococcus jannaschii).